A 361-amino-acid chain; its full sequence is S-adenosylmethionine decarboxylase proenzyme (361 aa).

Residues Glu-13 and Glu-16 contribute to the active site. Ser-73 serves as the catalytic Schiff-base intermediate with substrate; via pyruvic acid. Ser-73 carries the post-translational modification Pyruvic acid (Ser); by autocatalysis. Cys-87 functions as the Proton donor; for catalytic activity in the catalytic mechanism. Residues Ser-236 and His-249 each act as proton acceptor; for processing activity in the active site.

It belongs to the eukaryotic AdoMetDC family. It depends on pyruvate as a cofactor. Post-translationally, is synthesized initially as an inactive proenzyme. Formation of the active enzyme involves a self-maturation process in which the active site pyruvoyl group is generated from an internal serine residue via an autocatalytic post-translational modification. Two non-identical subunits are generated from the proenzyme in this reaction, and the pyruvate is formed at the N-terminus of the alpha chain, which is derived from the carboxyl end of the proenzyme. The post-translation cleavage follows an unusual pathway, termed non-hydrolytic serinolysis, in which the side chain hydroxyl group of the serine supplies its oxygen atom to form the C-terminus of the beta chain, while the remainder of the serine residue undergoes an oxidative deamination to produce ammonia and the pyruvoyl group blocking the N-terminus of the alpha chain.

It carries out the reaction S-adenosyl-L-methionine + H(+) = S-adenosyl 3-(methylsulfanyl)propylamine + CO2. It participates in amine and polyamine biosynthesis; S-adenosylmethioninamine biosynthesis; S-adenosylmethioninamine from S-adenosyl-L-methionine: step 1/1. This Nicotiana tabacum (Common tobacco) protein is S-adenosylmethionine decarboxylase proenzyme (SAMDC).